The sequence spans 190 residues: Peptide deformylase (190 aa).

Residues cysteine 106 and histidine 148 each coordinate Fe cation. Glutamate 149 is a catalytic residue. Histidine 152 contributes to the Fe cation binding site.

The protein belongs to the polypeptide deformylase family. Fe(2+) serves as cofactor.

The catalysed reaction is N-terminal N-formyl-L-methionyl-[peptide] + H2O = N-terminal L-methionyl-[peptide] + formate. Functionally, removes the formyl group from the N-terminal Met of newly synthesized proteins. Requires at least a dipeptide for an efficient rate of reaction. N-terminal L-methionine is a prerequisite for activity but the enzyme has broad specificity at other positions. This Methylacidiphilum infernorum (isolate V4) (Methylokorus infernorum (strain V4)) protein is Peptide deformylase.